We begin with the raw amino-acid sequence, 146 residues long: Basic phospholipase A2 73 (146 aa).

Residues 1–19 (MYPAHLLVLLAVCVSLLGA) form the signal peptide. The propeptide occupies 20 to 27 (ASIPPLPL). Disulfide bonds link Cys-38–Cys-98, Cys-54–Cys-145, Cys-56–Cys-72, Cys-71–Cys-126, Cys-78–Cys-119, Cys-87–Cys-112, and Cys-105–Cys-117. The Ca(2+) site is built by Tyr-55, Gly-57, and Gly-59. His-75 is an active-site residue. Asp-76 serves as a coordination point for Ca(2+). Residue Asp-120 is part of the active site.

It belongs to the phospholipase A2 family. Group I subfamily. D49 sub-subfamily. Ca(2+) serves as cofactor. In terms of tissue distribution, expressed by the venom gland.

Its subcellular location is the secreted. The enzyme catalyses a 1,2-diacyl-sn-glycero-3-phosphocholine + H2O = a 1-acyl-sn-glycero-3-phosphocholine + a fatty acid + H(+). Snake venom phospholipase A2 (PLA2) that inhibits neuromuscular transmission by blocking acetylcholine release from the nerve termini. PLA2 catalyzes the calcium-dependent hydrolysis of the 2-acyl groups in 3-sn-phosphoglycerides. This Hydrophis hardwickii (Hardwick's spine-bellied seasnake) protein is Basic phospholipase A2 73.